Reading from the N-terminus, the 218-residue chain is Small ribosomal subunit protein uS3c (218 aa).

The KH type-2 domain occupies 47 to 118; it reads VQKNIRISSG…KLNIAITRIT (72 aa).

It belongs to the universal ribosomal protein uS3 family. In terms of assembly, part of the 30S ribosomal subunit.

Its subcellular location is the plastid. It localises to the chloroplast. This chain is Small ribosomal subunit protein uS3c (rps3), found in Vitis vinifera (Grape).